The following is a 515-amino-acid chain: MTTEPGYLSPSVAVATSMPKRGVGAAVLIVPVVSTGEEDRPGAVVASAEPFLRADTVAEIEAGLRALDATGASDQVHRLAVPSLPVGSVLTVGLGKPRREWPADTIRCAAGVAARALNSSEAVITTLAELPGDGICSATVEGLILGSYRFSAFRSDKTAPKDAGLRKITVLCCAKDAKKRALHGAAVATAVATARDLVNTPPSHLFPAEFAKRAKTLSESVGLDVEVIDEKALKKAGYGGVIGVGQGSSRPPRLVRLIHRGSRLAKNPQKAKKVALVGKGITFDTGGISIKPAASMHHMTSDMGGAAAVIATVTLAARLRLPIDVIATVPMAENMPSATAQRPGDVLTQYGGTTVEVLNTDAEGRLILADAIVRACEDKPDYLIETSTLTGAQTVALGTRIPGVMGSDEFRDRVAAISQRVGENGWPMPLPDDLKDDLKSTVADLANVSGQRFAGMLVAGVFLREFVAESVDWAHIDVAGPAYNTGSAWGYTPKGATGVPTRTMFAVLEDIAKNG.

Mn(2+) contacts are provided by Lys-279 and Asp-284. Lys-291 is a catalytic residue. Mn(2+) is bound by residues Asp-302, Asp-361, and Glu-363. Arg-365 is a catalytic residue.

This sequence belongs to the peptidase M17 family. Requires Mn(2+) as cofactor.

The protein resides in the cytoplasm. The catalysed reaction is Release of an N-terminal amino acid, Xaa-|-Yaa-, in which Xaa is preferably Leu, but may be other amino acids including Pro although not Arg or Lys, and Yaa may be Pro. Amino acid amides and methyl esters are also readily hydrolyzed, but rates on arylamides are exceedingly low.. It carries out the reaction Release of an N-terminal amino acid, preferentially leucine, but not glutamic or aspartic acids.. Functionally, presumably involved in the processing and regular turnover of intracellular proteins. Catalyzes the removal of unsubstituted N-terminal amino acids from various peptides. This chain is Probable cytosol aminopeptidase, found in Mycobacterium tuberculosis (strain ATCC 25177 / H37Ra).